Reading from the N-terminus, the 331-residue chain is Homoserine kinase (331 aa).

The protein belongs to the pseudomonas-type ThrB family.

The catalysed reaction is L-homoserine + ATP = O-phospho-L-homoserine + ADP + H(+). It functions in the pathway amino-acid biosynthesis; L-threonine biosynthesis; L-threonine from L-aspartate: step 4/5. This Cupriavidus necator (strain ATCC 17699 / DSM 428 / KCTC 22496 / NCIMB 10442 / H16 / Stanier 337) (Ralstonia eutropha) protein is Homoserine kinase.